Reading from the N-terminus, the 171-residue chain is Bursicon (171 aa).

A signal peptide spans 1-31 (MISSPSTPATFAAGSLVLLCLVLGGGHFALA). 5 cysteine pairs are disulfide-bonded: cysteine 47–cysteine 96, cysteine 61–cysteine 110, cysteine 71–cysteine 131, cysteine 75–cysteine 133, and cysteine 93–cysteine 136. The region spanning 47 to 137 (CQVTPVIHVL…PLECMCRPCT (91 aa)) is the CTCK domain.

In terms of assembly, heterodimer of burs and pburs.

The protein resides in the secreted. Final heterodimeric neurohormone released at the end of the molting cycle, involved in the sclerotization (tanning) of the insect cuticle, melanization and wing spreading. This is Bursicon from Culex pipiens pipiens (Northern house mosquito).